The sequence spans 338 residues: Phenylalanine--tRNA ligase alpha subunit (338 aa).

Position 252 (Glu-252) interacts with Mg(2+).

The protein belongs to the class-II aminoacyl-tRNA synthetase family. Phe-tRNA synthetase alpha subunit type 1 subfamily. As to quaternary structure, tetramer of two alpha and two beta subunits. Mg(2+) serves as cofactor.

The protein localises to the cytoplasm. The enzyme catalyses tRNA(Phe) + L-phenylalanine + ATP = L-phenylalanyl-tRNA(Phe) + AMP + diphosphate + H(+). In Pseudomonas fluorescens (strain ATCC BAA-477 / NRRL B-23932 / Pf-5), this protein is Phenylalanine--tRNA ligase alpha subunit.